The sequence spans 227 residues: Cytochrome c oxidase subunit 2 (227 aa).

At 1-14 the chain is on the mitochondrial intermembrane side; the sequence is MAYPFQLGFQDATS. A helical membrane pass occupies residues 15–45; sequence PIMEELLHFHDHTLMIVFLISSLVLYIITLM. The Mitochondrial matrix segment spans residues 46-59; that stretch reads LTTKLTHTSTMDAQ. A helical membrane pass occupies residues 60-87; that stretch reads EVETVWTILPAIILILIALPSLRILYMM. Topologically, residues 88-227 are mitochondrial intermembrane; that stretch reads DEVNNPSLTV…FFEKWSASML (140 aa). His-161, Cys-196, Glu-198, Cys-200, His-204, and Met-207 together coordinate Cu cation. A Mg(2+)-binding site is contributed by Glu-198.

Belongs to the cytochrome c oxidase subunit 2 family. In terms of assembly, component of the cytochrome c oxidase (complex IV, CIV), a multisubunit enzyme composed of 14 subunits. The complex is composed of a catalytic core of 3 subunits MT-CO1, MT-CO2 and MT-CO3, encoded in the mitochondrial DNA, and 11 supernumerary subunits COX4I, COX5A, COX5B, COX6A, COX6B, COX6C, COX7A, COX7B, COX7C, COX8 and NDUFA4, which are encoded in the nuclear genome. The complex exists as a monomer or a dimer and forms supercomplexes (SCs) in the inner mitochondrial membrane with NADH-ubiquinone oxidoreductase (complex I, CI) and ubiquinol-cytochrome c oxidoreductase (cytochrome b-c1 complex, complex III, CIII), resulting in different assemblies (supercomplex SCI(1)III(2)IV(1) and megacomplex MCI(2)III(2)IV(2)). Found in a complex with TMEM177, COA6, COX18, COX20, SCO1 and SCO2. Interacts with TMEM177 in a COX20-dependent manner. Interacts with COX20. Interacts with COX16. The cofactor is Cu cation.

Its subcellular location is the mitochondrion inner membrane. The catalysed reaction is 4 Fe(II)-[cytochrome c] + O2 + 8 H(+)(in) = 4 Fe(III)-[cytochrome c] + 2 H2O + 4 H(+)(out). Functionally, component of the cytochrome c oxidase, the last enzyme in the mitochondrial electron transport chain which drives oxidative phosphorylation. The respiratory chain contains 3 multisubunit complexes succinate dehydrogenase (complex II, CII), ubiquinol-cytochrome c oxidoreductase (cytochrome b-c1 complex, complex III, CIII) and cytochrome c oxidase (complex IV, CIV), that cooperate to transfer electrons derived from NADH and succinate to molecular oxygen, creating an electrochemical gradient over the inner membrane that drives transmembrane transport and the ATP synthase. Cytochrome c oxidase is the component of the respiratory chain that catalyzes the reduction of oxygen to water. Electrons originating from reduced cytochrome c in the intermembrane space (IMS) are transferred via the dinuclear copper A center (CU(A)) of subunit 2 and heme A of subunit 1 to the active site in subunit 1, a binuclear center (BNC) formed by heme A3 and copper B (CU(B)). The BNC reduces molecular oxygen to 2 water molecules using 4 electrons from cytochrome c in the IMS and 4 protons from the mitochondrial matrix. This chain is Cytochrome c oxidase subunit 2 (MT-CO2), found in Balaenoptera musculus (Blue whale).